Consider the following 277-residue polypeptide: Urease accessory protein UreD (277 aa).

Belongs to the UreD family. In terms of assembly, ureD, UreF and UreG form a complex that acts as a GTP-hydrolysis-dependent molecular chaperone, activating the urease apoprotein by helping to assemble the nickel containing metallocenter of UreC. The UreE protein probably delivers the nickel.

Its subcellular location is the cytoplasm. Functionally, required for maturation of urease via the functional incorporation of the urease nickel metallocenter. The protein is Urease accessory protein UreD of Pseudomonas putida (strain GB-1).